The following is a 153-amino-acid chain: Late embryogenesis abundant protein B19.4 (153 aa).

The tract at residues 1–153 is disordered; it reads MASGQQERSE…IDESKFKTKS (153 aa). Composition is skewed to basic and acidic residues over residues 7–19, 32–122, and 133–153; these read ERSE…REGE, EAQE…EMGR, and GGER…KTKS. 4 consecutive repeat copies span residues 43–62, 63–82, 83–102, and 103–122. Residues 43–122 are 4 X 20 AA tandem repeats; that stretch reads RGGQTRKEQL…GEEGYREMGR (80 aa).

It belongs to the small hydrophilic plant seed protein family.

Its function is as follows. Lea proteins are late embryonic proteins abundant in higher plant seed embryos. This chain is Late embryogenesis abundant protein B19.4 (B19.4), found in Hordeum vulgare (Barley).